Reading from the N-terminus, the 631-residue chain is Phosphomethylpyrimidine synthase (631 aa).

Substrate-binding positions include asparagine 239, methionine 268, tyrosine 297, histidine 333, 353 to 355 (SRG), 394 to 397 (DGLR), and glutamate 433. Zn(2+) is bound at residue histidine 437. Tyrosine 460 serves as a coordination point for substrate. Position 501 (histidine 501) interacts with Zn(2+). [4Fe-4S] cluster is bound by residues cysteine 581, cysteine 584, and cysteine 589.

The protein belongs to the ThiC family. As to quaternary structure, homodimer. Requires [4Fe-4S] cluster as cofactor.

It carries out the reaction 5-amino-1-(5-phospho-beta-D-ribosyl)imidazole + S-adenosyl-L-methionine = 4-amino-2-methyl-5-(phosphooxymethyl)pyrimidine + CO + 5'-deoxyadenosine + formate + L-methionine + 3 H(+). It functions in the pathway cofactor biosynthesis; thiamine diphosphate biosynthesis. Catalyzes the synthesis of the hydroxymethylpyrimidine phosphate (HMP-P) moiety of thiamine from aminoimidazole ribotide (AIR) in a radical S-adenosyl-L-methionine (SAM)-dependent reaction. The sequence is that of Phosphomethylpyrimidine synthase from Salmonella paratyphi B (strain ATCC BAA-1250 / SPB7).